A 71-amino-acid chain; its full sequence is DNA-directed RNA polymerase subunit omega (71 aa).

This sequence belongs to the RNA polymerase subunit omega family. The RNAP catalytic core consists of 2 alpha, 1 beta, 1 beta' and 1 omega subunit. When a sigma factor is associated with the core the holoenzyme is formed, which can initiate transcription.

It catalyses the reaction RNA(n) + a ribonucleoside 5'-triphosphate = RNA(n+1) + diphosphate. Its function is as follows. Promotes RNA polymerase assembly. Latches the N- and C-terminal regions of the beta' subunit thereby facilitating its interaction with the beta and alpha subunits. The protein is DNA-directed RNA polymerase subunit omega of Syntrophomonas wolfei subsp. wolfei (strain DSM 2245B / Goettingen).